Reading from the N-terminus, the 634-residue chain is E3 ubiquitin/ISG15 ligase TRIM25 (634 aa).

The RING-type zinc finger occupies 13 to 54; sequence CSVCLELFKEPVTTPCGHNFCMSCLDETWVVQGPPYRCPQCR. A Phosphothreonine modification is found at Thr-90. The residue at position 99 (Ser-99) is a Phosphoserine. Residue Lys-116 forms a Glycyl lysine isopeptide (Lys-Gly) (interchain with G-Cter in ISG15) linkage. A coiled-coil region spans residues 215–305; that stretch reads ATKALEDVRS…LIMDKGDEFE (91 aa). Lys-272 is subject to N6-acetyllysine. Tyr-277 carries the post-translational modification Phosphotyrosine. Positions 353 to 437 are disordered; it reads KLQKKSEEHN…APKASAAQPD (85 aa). Polar residues predominate over residues 363–376; sequence GSGNKGDQTQSTFK. The B30.2/SPRY domain maps to 444–634; sequence KVLENFLTKS…AGTTLSICSK (191 aa). Position 572 is an N6-acetyllysine (Lys-572).

As to quaternary structure, forms homodimers. Interacts (via SPRY domain) with RIGI (via CARD domain). Interacts with ZFHX3. Interacts with NLRP12; this interaction reduces the E3 ubiquitin ligase TRIM25-mediated 'Lys-63'-linked RIGI activation. Interacts with the KHDC3L/FILIA-OOEP/FLOPED scaffold complex and BLM at DNA replication forks. Interacts with RTN3; this interaction prevents RIGI ubiquitination. Interacts with YWHAE. Post-translationally, auto-ISGylated. In terms of tissue distribution, ubiquitous.

The protein localises to the cytoplasm. It localises to the stress granule. Its subcellular location is the nucleus. It carries out the reaction S-ubiquitinyl-[E2 ubiquitin-conjugating enzyme]-L-cysteine + [acceptor protein]-L-lysine = [E2 ubiquitin-conjugating enzyme]-L-cysteine + N(6)-ubiquitinyl-[acceptor protein]-L-lysine.. The catalysed reaction is ATP + [ISG15] + [protein]-lysine = AMP + diphosphate + [protein]-N-ISGyllysine.. It participates in protein modification; protein ubiquitination. Its function is as follows. Functions as a ubiquitin E3 ligase and as an ISG15 E3 ligase. Involved in innate immune defense against viruses by mediating ubiquitination of RIGI and IFIH1. Mediates 'Lys-63'-linked polyubiquitination of the RIGI N-terminal CARD-like region and may play a role in signal transduction that leads to the production of interferons in response to viral infection. Mediates 'Lys-63'-linked polyubiquitination of IFIH1. Promotes ISGylation of 14-3-3 sigma (SFN), an adapter protein implicated in the regulation of a large spectrum signaling pathway. Mediates estrogen action in various target organs. Mediates the ubiquitination and subsequent proteasomal degradation of ZFHX3. Plays a role in promoting the restart of stalled replication forks via interaction with the KHDC3L-OOEP scaffold and subsequent ubiquitination of BLM, resulting in the recruitment and retainment of BLM at DNA replication forks. Plays an essential role in the antiviral activity of ZAP/ZC3HAV1; an antiviral protein which inhibits the replication of certain viruses. Mechanistically, mediates 'Lys-63'-linked polyubiquitination of ZAP/ZC3HAV1 that is required for its optimal binding to target mRNA. Also mediates the ubiquitination of various substrates implicated in stress granule formation, nonsense-mediated mRNA decay, nucleoside synthesis and mRNA translation and stability. This chain is E3 ubiquitin/ISG15 ligase TRIM25 (Trim25), found in Mus musculus (Mouse).